A 96-amino-acid polypeptide reads, in one-letter code: Co-chaperonin GroES (96 aa).

It belongs to the GroES chaperonin family. As to quaternary structure, heptamer of 7 subunits arranged in a ring. Interacts with the chaperonin GroEL.

The protein localises to the cytoplasm. Together with the chaperonin GroEL, plays an essential role in assisting protein folding. The GroEL-GroES system forms a nano-cage that allows encapsulation of the non-native substrate proteins and provides a physical environment optimized to promote and accelerate protein folding. GroES binds to the apical surface of the GroEL ring, thereby capping the opening of the GroEL channel. This Haemophilus influenzae (strain ATCC 51907 / DSM 11121 / KW20 / Rd) protein is Co-chaperonin GroES.